We begin with the raw amino-acid sequence, 73 residues long: UPF0154 protein MYCGA5700 (73 aa).

Residues 5–25 (LALGLSIPLCLIVGAFVGYFV) traverse the membrane as a helical segment.

The protein belongs to the UPF0154 family.

The protein localises to the membrane. In Mycoplasmoides gallisepticum (strain R(low / passage 15 / clone 2)) (Mycoplasma gallisepticum), this protein is UPF0154 protein MYCGA5700.